The primary structure comprises 335 residues: Vitamin B12 import system permease protein BtuC (335 aa).

The next 8 helical transmembrane spans lie at 25-45 (LVVM…VWIW), 67-87 (MAVI…QALF), 94-113 (PGLL…AVLL), 117-139 (LLPI…SILL), 153-173 (LLVG…AVYF), 243-263 (VLAI…ISFI), 281-301 (RLLA…DVVA), and 309-329 (ELPI…WLLI).

It belongs to the binding-protein-dependent transport system permease family. FecCD subfamily. In terms of assembly, the complex is composed of two ATP-binding proteins (BtuD), two transmembrane proteins (BtuC) and a solute-binding protein (BtuF).

The protein resides in the cell inner membrane. Part of the ABC transporter complex BtuCDF involved in vitamin B12 import. Involved in the translocation of the substrate across the membrane. This chain is Vitamin B12 import system permease protein BtuC, found in Yersinia pseudotuberculosis serotype O:1b (strain IP 31758).